We begin with the raw amino-acid sequence, 131 residues long: Phosphoribosyl-AMP cyclohydrolase (131 aa).

Asp-76 contacts Mg(2+). Residue Cys-77 coordinates Zn(2+). Mg(2+) contacts are provided by Asp-78 and Asp-80. Zn(2+) contacts are provided by Cys-94 and Cys-101.

This sequence belongs to the PRA-CH family. Homodimer. It depends on Mg(2+) as a cofactor. Requires Zn(2+) as cofactor.

The protein localises to the cytoplasm. It carries out the reaction 1-(5-phospho-beta-D-ribosyl)-5'-AMP + H2O = 1-(5-phospho-beta-D-ribosyl)-5-[(5-phospho-beta-D-ribosylamino)methylideneamino]imidazole-4-carboxamide. It participates in amino-acid biosynthesis; L-histidine biosynthesis; L-histidine from 5-phospho-alpha-D-ribose 1-diphosphate: step 3/9. In terms of biological role, catalyzes the hydrolysis of the adenine ring of phosphoribosyl-AMP. This chain is Phosphoribosyl-AMP cyclohydrolase, found in Stutzerimonas stutzeri (strain A1501) (Pseudomonas stutzeri).